A 750-amino-acid polypeptide reads, in one-letter code: Photosystem I P700 chlorophyll a apoprotein A1 (750 aa).

Helical transmembrane passes span 70–93 (VFSA…FHGA), 156–179 (LYCT…FHYH), 195–219 (LNHH…HVSL), 291–309 (IAHH…GHMY), 346–369 (WHAQ…HHMY), 385–411 (LSLF…IFMV), 433–455 (AIIS…LYIH), and 531–549 (FLVH…LILL). 2 residues coordinate [4Fe-4S] cluster: cysteine 573 and cysteine 582. Transmembrane regions (helical) follow at residues 589 to 610 (HVFL…HFSW) and 664 to 686 (LSAY…MFLF). Histidine 675 serves as a coordination point for chlorophyll a'. Chlorophyll a is bound by residues methionine 683 and tyrosine 691. Tryptophan 692 is a binding site for phylloquinone. Residues 724–744 (AVGVTHYLLGGIATTWAFFLA) traverse the membrane as a helical segment.

This sequence belongs to the PsaA/PsaB family. In terms of assembly, the PsaA/B heterodimer binds the P700 chlorophyll special pair and subsequent electron acceptors. PSI consists of a core antenna complex that captures photons, and an electron transfer chain that converts photonic excitation into a charge separation. The eukaryotic PSI reaction center is composed of at least 11 subunits. The cofactor is P700 is a chlorophyll a/chlorophyll a' dimer, A0 is one or more chlorophyll a, A1 is one or both phylloquinones and FX is a shared 4Fe-4S iron-sulfur center..

It localises to the plastid. The protein resides in the chloroplast thylakoid membrane. The catalysed reaction is reduced [plastocyanin] + hnu + oxidized [2Fe-2S]-[ferredoxin] = oxidized [plastocyanin] + reduced [2Fe-2S]-[ferredoxin]. In terms of biological role, psaA and PsaB bind P700, the primary electron donor of photosystem I (PSI), as well as the electron acceptors A0, A1 and FX. PSI is a plastocyanin-ferredoxin oxidoreductase, converting photonic excitation into a charge separation, which transfers an electron from the donor P700 chlorophyll pair to the spectroscopically characterized acceptors A0, A1, FX, FA and FB in turn. Oxidized P700 is reduced on the lumenal side of the thylakoid membrane by plastocyanin. This chain is Photosystem I P700 chlorophyll a apoprotein A1, found in Saccharum hybrid (Sugarcane).